The sequence spans 858 residues: Magnesium transporter ALR2 (858 aa).

The segment covering 1 to 14 (MSSLSTSFDSSSDL) has biased composition (low complexity). 3 disordered regions span residues 1-81 (MSSL…NGGY), 318-337 (TYNH…TSGS), and 365-396 (NNES…EGND). At 1–741 (MSSLSTSFDS…NNKVTEMLGK (741 aa)) the chain is on the cytoplasmic side. The segment covering 46 to 61 (PIRHEALALKVDETKD) has biased composition (basic and acidic residues). Over residues 67–81 (SSSNGENSGVENGGY) the composition is skewed to low complexity. Basic and acidic residues-rich tracts occupy residues 367–379 (ESVR…DLHP) and 386–395 (NKIEGEKEGN). Residues 742-762 (VTMLGTMLVPLNVITGLFGMN) form a helical membrane-spanning segment. The Extracellular portion of the chain corresponds to 763–771 (VKVPGRNGS). A helical membrane pass occupies residues 772 to 792 (IAWWYGILGVLLLLAVISWFL). Topologically, residues 793–858 (ASYWIKKIDP…SLPSRYSRYN (66 aa)) are cytoplasmic.

This sequence belongs to the CorA metal ion transporter (MIT) (TC 1.A.35) family.

It localises to the cell membrane. Plasma membrane magnesium transporter. The sequence is that of Magnesium transporter ALR2 (ALR2) from Saccharomyces cerevisiae (strain ATCC 204508 / S288c) (Baker's yeast).